A 762-amino-acid chain; its full sequence is Catalase-peroxidase (762 aa).

The disordered stretch occupies residues 1–22; that stretch reads MAEAKCPFSQSRSNANVAGGGT. The segment at residues 96-242 is a cross-link (tryptophyl-tyrosyl-methioninium (Trp-Tyr) (with M-268)); sequence WHSAGTYRVF…LAASHMGLIY (147 aa). Histidine 97 serves as the catalytic Proton acceptor. Positions 242–268 form a cross-link, tryptophyl-tyrosyl-methioninium (Tyr-Met) (with W-96); it reads YVNPEGPDGNPDPVAAARDIRTTFGRM. Position 283 (histidine 283) interacts with heme b.

The protein belongs to the peroxidase family. Peroxidase/catalase subfamily. In terms of assembly, homodimer or homotetramer. Heme b is required as a cofactor. Post-translationally, formation of the three residue Trp-Tyr-Met cross-link is important for the catalase, but not the peroxidase activity of the enzyme.

Its subcellular location is the cytoplasm. The catalysed reaction is H2O2 + AH2 = A + 2 H2O. It catalyses the reaction 2 H2O2 = O2 + 2 H2O. Bifunctional enzyme with both catalase and broad-spectrum peroxidase activity. The polypeptide is Catalase-peroxidase (Aspergillus niger (strain ATCC MYA-4892 / CBS 513.88 / FGSC A1513)).